The sequence spans 85 residues: uncharacterized protein (85 aa).

3 consecutive transmembrane segments (helical) span residues 4–24, 27–47, and 61–81; these read LTLCWLALLALAVTGVLLGGA, SPWLLAAVLACAVAKGWLIGE, and RLLLAWPLLMALAVGAALYLA.

It localises to the cell membrane. This is an uncharacterized protein from Pseudomonas aeruginosa (strain ATCC 15692 / DSM 22644 / CIP 104116 / JCM 14847 / LMG 12228 / 1C / PRS 101 / PAO1).